The chain runs to 562 residues: MFS-type transporter calB (562 aa).

Residues M1–E16 show a composition bias toward polar residues. Positions M1–E45 are disordered. Residues F57 to I77 form a helical membrane-spanning segment. N-linked (GlcNAc...) asparagine glycosylation is present at N83. 13 helical membrane passes run I94–G113, W123–N143, V154–V174, G184–L204, C213–V233, L256–G276, S284–W304, I329–F349, V362–V382, L389–F409, W418–I438, V451–G471, and V530–W550. N-linked (GlcNAc...) asparagine glycosylation occurs at N557.

It belongs to the major facilitator superfamily. TCR/Tet family.

It is found in the cell membrane. Functionally, MFS-type transporter; part of the gene cluster that mediates the biosynthesis of calbistrin A and related compounds. Calbistrin A is a secondary metabolite with an interesting structure that was recently found to have bioactivity against leukemia cells. It consists of two polyketides linked by an ester bond: a bicyclic decalin containing polyketide and a linear 12 carbon dioic acid structure. Required for the secretion of calbistrin A and calbistrin C, as well as of related compounds decumbenone A, B and C. This chain is MFS-type transporter calB, found in Penicillium decumbens.